The chain runs to 224 residues: uncharacterized protein (224 aa).

Residues 21–41 (LTVILIIPIVYLGVCGCFEIV) traverse the membrane as a helical segment.

It localises to the membrane. This is an uncharacterized protein from Methanocaldococcus jannaschii (strain ATCC 43067 / DSM 2661 / JAL-1 / JCM 10045 / NBRC 100440) (Methanococcus jannaschii).